A 173-amino-acid chain; its full sequence is RNA pyrophosphohydrolase (173 aa).

The 144-residue stretch at 6 to 149 folds into the Nudix hydrolase domain; it reads GFRANVGIIL…KRSVYRRALQ (144 aa). The Nudix box signature appears at 38–59; that stretch reads GGIDRGETPMDAMYRELWEEVG.

It belongs to the Nudix hydrolase family. RppH subfamily. The cofactor is a divalent metal cation.

In terms of biological role, accelerates the degradation of transcripts by removing pyrophosphate from the 5'-end of triphosphorylated RNA, leading to a more labile monophosphorylated state that can stimulate subsequent ribonuclease cleavage. This is RNA pyrophosphohydrolase from Psychrobacter cryohalolentis (strain ATCC BAA-1226 / DSM 17306 / VKM B-2378 / K5).